Consider the following 117-residue polypeptide: uncharacterized protein (117 aa).

4 consecutive transmembrane segments (helical) span residues 3 to 23 (AVPIILVFAAGLNSCIGNILL), 40 to 60 (FLTPGFVGGVVFYGINVLLFA), 66 to 86 (LEVSVAYPILAGSGFAMLIIA), and 94 to 114 (PFHLHKWIGVALVLVGIIFLA).

To E.coli and S.aureus ethidium bromide resistance proteins (ebr/QacC/EmrE/MvrC).

It is found in the cell membrane. This is an uncharacterized protein from Sinorhizobium fredii (strain NBRC 101917 / NGR234).